A 307-amino-acid chain; its full sequence is MTEQATKPRNSSHLIGGFFGGLTSAVALQPLDLLKTRIQQDKKATLWKNLKEIDSPLQLWRGTLPSALRTSIGSALYLSCLNLMRSSLAKRRNAVPSLTNDSNIVYNKSSSLPRLTMYENLLTGAFARGLVGYITMPITVIKVRYESTLYNYSSLKEAITHIYTKEGLFGFFRGFGATCLRDAPYAGLYVLLYEKSKQLLPMVLPSRFIHYNPEGGFTTYTSTTVNTTSAVLSASLATTVTAPFDTIKTRMQLEPSKFTNSFNTFTSIVKNENVLKLFSGLSMRLARKAFSAGIAWGIYEELVKRFM.

Solcar repeat units lie at residues 8-87, 115-199, and 221-305; these read PRNS…MRSS, LTMY…SKQL, and TSTT…LVKR. Helical transmembrane passes span 14 to 39, 62 to 88, 121 to 146, 174 to 197, 225 to 251, and 280 to 298; these read LIGGFFGGLTSAVALQPLDLLKTRIQ, GTLPSALRTSIGSALYLSCLNLMRSSL, LLTGAFARGLVGYITMPITVIKVRYE, GFGATCLRDAPYAGLYVLLYEKSK, VNTTSAVLSASLATTVTAPFDTIKTRM, and GLSMRLARKAFSAGIAWGI.

This sequence belongs to the mitochondrial carrier (TC 2.A.29) family. SLC25A38 subfamily.

It is found in the mitochondrion. It localises to the mitochondrion inner membrane. It catalyses the reaction glycine(in) = glycine(out). Functionally, mitochondrial glycine transporter that imports glycine into the mitochondrial matrix. Plays an important role in providing glycine for the first enzymatic step in heme biosynthesis, the condensation of glycine with succinyl-CoA to produce 5-aminolevulinate (ALA) in the mitochondrial matrix. This is Mitochondrial glycine transporter from Saccharomyces cerevisiae (strain ATCC 204508 / S288c) (Baker's yeast).